A 185-amino-acid polypeptide reads, in one-letter code: Thioredoxin F2, chloroplastic (185 aa).

Positions 59–184 (RRIGSCVVRC…LLAAIEAARS (126 aa)) constitute a Thioredoxin domain. Active-site nucleophile residues include Cys109 and Cys112. A disulfide bridge connects residues Cys109 and Cys112. S-glutathionyl cysteine; transient is present on Cys136.

This sequence belongs to the thioredoxin family. Plant F-type subfamily. Glutathionylation at Cys-136 decreases its ability to be reduced by ferredoxin-thioredoxin reductase and reduces its efficiency in activating target chloroplastic enzymes.

It localises to the plastid. The protein localises to the chloroplast stroma. Functionally, probable thiol-disulfide oxidoreductase involved in the redox regulation of enzymes of both reductive pentose phosphate pathway (Calvin-Benson cycle) and oxidative pentose phosphate pathway. The chain is Thioredoxin F2, chloroplastic from Arabidopsis thaliana (Mouse-ear cress).